A 425-amino-acid polypeptide reads, in one-letter code: Serine--tRNA ligase (425 aa).

231–233 (TAE) contacts L-serine. An ATP-binding site is contributed by 262–264 (RSE). Glu285 provides a ligand contact to L-serine. 349 to 352 (EISS) serves as a coordination point for ATP. L-serine is bound at residue Ser385.

The protein belongs to the class-II aminoacyl-tRNA synthetase family. Type-1 seryl-tRNA synthetase subfamily. In terms of assembly, homodimer. The tRNA molecule binds across the dimer.

The protein resides in the cytoplasm. The enzyme catalyses tRNA(Ser) + L-serine + ATP = L-seryl-tRNA(Ser) + AMP + diphosphate + H(+). The catalysed reaction is tRNA(Sec) + L-serine + ATP = L-seryl-tRNA(Sec) + AMP + diphosphate + H(+). It participates in aminoacyl-tRNA biosynthesis; selenocysteinyl-tRNA(Sec) biosynthesis; L-seryl-tRNA(Sec) from L-serine and tRNA(Sec): step 1/1. Catalyzes the attachment of serine to tRNA(Ser). Is also able to aminoacylate tRNA(Sec) with serine, to form the misacylated tRNA L-seryl-tRNA(Sec), which will be further converted into selenocysteinyl-tRNA(Sec). The chain is Serine--tRNA ligase from Alkaliphilus oremlandii (strain OhILAs) (Clostridium oremlandii (strain OhILAs)).